Here is a 119-residue protein sequence, read N- to C-terminus: Ribonuclease P protein component (119 aa).

This sequence belongs to the RnpA family. Consists of a catalytic RNA component (M1 or rnpB) and a protein subunit.

The enzyme catalyses Endonucleolytic cleavage of RNA, removing 5'-extranucleotides from tRNA precursor.. RNaseP catalyzes the removal of the 5'-leader sequence from pre-tRNA to produce the mature 5'-terminus. It can also cleave other RNA substrates such as 4.5S RNA. The protein component plays an auxiliary but essential role in vivo by binding to the 5'-leader sequence and broadening the substrate specificity of the ribozyme. The sequence is that of Ribonuclease P protein component from Syntrophus aciditrophicus (strain SB).